Consider the following 118-residue polypeptide: Large ribosomal subunit protein bL20 (118 aa).

The protein belongs to the bacterial ribosomal protein bL20 family.

Functionally, binds directly to 23S ribosomal RNA and is necessary for the in vitro assembly process of the 50S ribosomal subunit. It is not involved in the protein synthesizing functions of that subunit. This Staphylococcus carnosus (strain TM300) protein is Large ribosomal subunit protein bL20.